A 345-amino-acid polypeptide reads, in one-letter code: Homeobox protein DBX1 (345 aa).

Disordered stretches follow at residues 55–103 (PRGS…VSPA) and 241–345 (KERE…ITVS). The homeobox DNA-binding region spans 182–241 (GMLRRAVFSDVQRKALEKMFQKQKYISKPDRKKLAAKLGLKDSQVKIWFQNRRMKWRNSK). The segment covering 300–309 (DPRHLRDPRL) has biased composition (basic and acidic residues). Residues 330 to 345 (SDSEDDEEGEEEITVS) show a composition bias toward acidic residues.

This sequence belongs to the H2.0 homeobox family.

Its subcellular location is the nucleus. Its function is as follows. Could have a role in patterning the central nervous system during embryogenesis. Has a key role in regulating the distinct phenotypic features that distinguish two major classes of ventral interneurons, V0 and V1 neurons. Regulates the transcription factor profile, neurotransmitter phenotype, intraspinal migratory path and axonal trajectory of V0 neurons, features that differentiate them from an adjacent set of V1 neurons. The protein is Homeobox protein DBX1 (DBX1) of Bos taurus (Bovine).